The chain runs to 481 residues: Glutamyl-tRNA(Gln) amidotransferase subunit A (481 aa).

Catalysis depends on charge relay system residues lysine 76 and serine 151. Serine 175 serves as the catalytic Acyl-ester intermediate.

Belongs to the amidase family. GatA subfamily. In terms of assembly, heterotrimer of A, B and C subunits.

The enzyme catalyses L-glutamyl-tRNA(Gln) + L-glutamine + ATP + H2O = L-glutaminyl-tRNA(Gln) + L-glutamate + ADP + phosphate + H(+). Allows the formation of correctly charged Gln-tRNA(Gln) through the transamidation of misacylated Glu-tRNA(Gln) in organisms which lack glutaminyl-tRNA synthetase. The reaction takes place in the presence of glutamine and ATP through an activated gamma-phospho-Glu-tRNA(Gln). The sequence is that of Glutamyl-tRNA(Gln) amidotransferase subunit A from Chlorobaculum parvum (strain DSM 263 / NCIMB 8327) (Chlorobium vibrioforme subsp. thiosulfatophilum).